The primary structure comprises 360 residues: Aminomethyltransferase (360 aa).

The protein belongs to the GcvT family. As to quaternary structure, the glycine cleavage system is composed of four proteins: P, T, L and H.

It catalyses the reaction N(6)-[(R)-S(8)-aminomethyldihydrolipoyl]-L-lysyl-[protein] + (6S)-5,6,7,8-tetrahydrofolate = N(6)-[(R)-dihydrolipoyl]-L-lysyl-[protein] + (6R)-5,10-methylene-5,6,7,8-tetrahydrofolate + NH4(+). Functionally, the glycine cleavage system catalyzes the degradation of glycine. This chain is Aminomethyltransferase, found in Legionella pneumophila (strain Paris).